The following is a 228-amino-acid chain: Movement and silencing protein TGBp1 (228 aa).

The (+)RNA virus helicase ATP-binding domain occupies methionine 1–leucine 132. Residues serine 133–serine 228 enclose the (+)RNA virus helicase C-terminal domain.

It belongs to the Tymovirales TGBp1 protein family. In terms of assembly, homodimer and homooligomer. Interacts with capsid protein. Interacts with host AGO1; this interaction targets the host protein for degradation, thereby suppressing the antiviral RNA silencing.

It is found in the host cytoplasm. Functionally, transports viral genome to neighboring plant cells directly through plasmosdesmata, without any budding. The movement protein allows efficient cell to cell propagation, by bypassing the host cell wall barrier. Increases plasmodesma size exclusion limit. Acts as a suppressor of RNA-mediated gene silencing, also known as post-transcriptional gene silencing (PTGS), a mechanism of plant viral defense that limits the accumulation of viral RNAs. The chain is Movement and silencing protein TGBp1 from Lilium (LSV).